A 636-amino-acid polypeptide reads, in one-letter code: Polyglycine hydrolase (636 aa).

The N-terminal stretch at 1-22 is a signal peptide; sequence MHSLSLRRLLTSVLSLCSCSSA. N-linked (GlcNAc...) asparagine glycosylation is found at Asn-30 and Asn-151. A disulfide bridge connects residues Cys-141 and Cys-175. Ser-363 is a catalytic residue. Asn-383 and Asn-481 each carry an N-linked (GlcNAc...) asparagine glycan. Residues 512-540 form a disordered region; the sequence is TEDRIVQESKNTGQDPVHPQSAKLVPGPH.

It belongs to the peptidase S12 family.

It is found in the secreted. The enzyme catalyses a glycyl-glycyl-[protein] + H2O = N-terminal glycyl-[protein] + [protein]-C-terminal glycine. In terms of biological role, serine-type endopeptidase that cleaves Gly-Gly bonds in the polyglycine linker of host plant class IV chitinases to disrupt their chitin-binding, and thereby plays a role in lowering the defense responses of the host to the fungus. Degrades Z.mays Endochitinase A (CHIA) in vitro, although corn is not its host species. The chain is Polyglycine hydrolase from Fusarium vanettenii (strain ATCC MYA-4622 / CBS 123669 / FGSC 9596 / NRRL 45880 / 77-13-4) (Fusarium solani subsp. pisi).